A 334-amino-acid polypeptide reads, in one-letter code: 6-phosphogluconolactonase (334 aa).

This sequence belongs to the cycloisomerase 2 family.

It carries out the reaction 6-phospho-D-glucono-1,5-lactone + H2O = 6-phospho-D-gluconate + H(+). Its pathway is carbohydrate degradation; pentose phosphate pathway; D-ribulose 5-phosphate from D-glucose 6-phosphate (oxidative stage): step 2/3. Functionally, catalyzes the hydrolysis of 6-phosphogluconolactone to 6-phosphogluconate. This Buchnera aphidicola subsp. Acyrthosiphon pisum (strain APS) (Acyrthosiphon pisum symbiotic bacterium) protein is 6-phosphogluconolactonase.